We begin with the raw amino-acid sequence, 723 residues long: Probable C-mannosyltransferase DPY19L4 (723 aa).

Residues 1–33 (MAEEEGPPVELRQRKKPKSSENKESAKEEKISD) form a disordered region. N-acetylalanine is present on A2. Over residues 18–32 (KSSENKESAKEEKIS) the composition is skewed to basic and acidic residues. A run of 12 helical transmembrane segments spans residues 52 to 72 (IFIGCLAAVTSGMMYALYLSA), 161 to 178 (VYFYIGIVFGLQGIYVTA), 184 to 202 (WLMSGTWLAGMLTVAWFVI), 222 to 240 (LPYFACQIAALTGYLKSNL), 260 to 280 (MMMWEYSHYLLFLQAISLFLL), 292 to 310 (YEVYKIYIFSLFLGYLLQF), 316 to 337 (LVSPLLSLVAALMLAKCLQLNV), 349 to 370 (VINFYLVCTLTITLNIIMKMFV), 421 to 441 (LLPFYILVLIICFLSMLQVIF), 466 to 486 (IIYHVIHTILLGSLAMVIEGL), 489 to 509 (IWIPYVCMLAAFGVCSPELWM), and 522 to 542 (PILLALILSMAVPTIIGLSLW).

The protein belongs to the dpy-19 family. Widely expressed.

The protein localises to the membrane. Its function is as follows. Probable C-mannosyltransferase that mediates C-mannosylation of tryptophan residues on target proteins. The polypeptide is Probable C-mannosyltransferase DPY19L4 (DPY19L4) (Homo sapiens (Human)).